A 95-amino-acid chain; its full sequence is Cell division protein FtsB (95 aa).

The Cytoplasmic segment spans residues 1–3 (MRL). Residues 4–21 (FILILSAILLLFQYDLWF) traverse the membrane as a helical segment. Residues 22-95 (GKNGYLDYKE…RIAKENKDNR (74 aa)) lie on the Periplasmic side of the membrane. Positions 28–62 (DYKETAEEIAMHKAENTKLSQRNQVVAAEIRDLKD) form a coiled coil.

This sequence belongs to the FtsB family. In terms of assembly, part of a complex composed of FtsB, FtsL and FtsQ.

Its subcellular location is the cell inner membrane. In terms of biological role, essential cell division protein. May link together the upstream cell division proteins, which are predominantly cytoplasmic, with the downstream cell division proteins, which are predominantly periplasmic. The chain is Cell division protein FtsB from Mannheimia succiniciproducens (strain KCTC 0769BP / MBEL55E).